Here is a 251-residue protein sequence, read N- to C-terminus: Small ribosomal subunit protein uS2 (251 aa).

Belongs to the universal ribosomal protein uS2 family.

The protein is Small ribosomal subunit protein uS2 of Aromatoleum aromaticum (strain DSM 19018 / LMG 30748 / EbN1) (Azoarcus sp. (strain EbN1)).